A 198-amino-acid polypeptide reads, in one-letter code: Transcription factor elt-7 (198 aa).

The span at 1–18 (MLPETTTLQPLPSVTTIM) shows a compositional bias: polar residues. A disordered region spans residues 1–20 (MLPETTTLQPLPSVTTIMNE). The GATA-type zinc-finger motif lies at 143–167 (CSHCSTTTTTLWRKNDEGNLECNAC).

It localises to the nucleus. In terms of biological role, transcriptional activator that binds to the consensus sequence 5'-[AT]GATA[AG]-3'. Required for gut-specific differentiation, specifically acting with the GATA region-binding transcription factor elt-2 to control normal gene expression and promote normal formation of the intestine. May have a protective role in response to infection by Gram-negative bacteria such as P.aeruginosa. In Caenorhabditis elegans, this protein is Transcription factor elt-7.